Consider the following 615-residue polypeptide: DNA mismatch repair protein MutL (615 aa).

The segment at His362–Tyr397 is disordered. Residues Pro378–Pro391 show a composition bias toward low complexity.

This sequence belongs to the DNA mismatch repair MutL/HexB family.

In terms of biological role, this protein is involved in the repair of mismatches in DNA. It is required for dam-dependent methyl-directed DNA mismatch repair. May act as a 'molecular matchmaker', a protein that promotes the formation of a stable complex between two or more DNA-binding proteins in an ATP-dependent manner without itself being part of a final effector complex. The chain is DNA mismatch repair protein MutL from Escherichia coli O17:K52:H18 (strain UMN026 / ExPEC).